A 313-amino-acid polypeptide reads, in one-letter code: Probable F-box protein At3g44130 (313 aa).

The F-box domain occupies 1–46 (MASGNLPWELEEEILCRLPLGSLVRLRSVCKHWNDFFNDKWFIKKS).

The protein is Probable F-box protein At3g44130 of Arabidopsis thaliana (Mouse-ear cress).